A 1372-amino-acid polypeptide reads, in one-letter code: DNA-directed RNA polymerase subunit beta (1372 aa).

It belongs to the RNA polymerase beta chain family. As to quaternary structure, the RNAP catalytic core consists of 2 alpha, 1 beta, 1 beta' and 1 omega subunit. When a sigma factor is associated with the core the holoenzyme is formed, which can initiate transcription.

It catalyses the reaction RNA(n) + a ribonucleoside 5'-triphosphate = RNA(n+1) + diphosphate. Functionally, DNA-dependent RNA polymerase catalyzes the transcription of DNA into RNA using the four ribonucleoside triphosphates as substrates. This chain is DNA-directed RNA polymerase subunit beta, found in Nitratidesulfovibrio vulgaris (strain DP4) (Desulfovibrio vulgaris).